Consider the following 236-residue polypeptide: Sugar fermentation stimulation protein homolog (236 aa).

This sequence belongs to the SfsA family.

The chain is Sugar fermentation stimulation protein homolog from Methylobacterium nodulans (strain LMG 21967 / CNCM I-2342 / ORS 2060).